Reading from the N-terminus, the 163-residue chain is Small ribosomal subunit protein bS18c (163 aa).

2 disordered regions span residues 1–54 and 121–163; these read MYTS…PGDR and ITGP…SSDC. Residues 7–48 show a composition bias toward basic residues; it reads PFHKSKQTFHKSKQTFRKSKQTFRKFKQPFRKPKQPFRRRPR. Residues 140–163 show a composition bias toward low complexity; sequence NSNRNLRNSNQTLRNNNRNLSSDC.

It belongs to the bacterial ribosomal protein bS18 family. As to quaternary structure, part of the 30S ribosomal subunit.

The protein resides in the plastid. It localises to the chloroplast. This chain is Small ribosomal subunit protein bS18c, found in Oryza nivara (Indian wild rice).